We begin with the raw amino-acid sequence, 339 residues long: NADH-quinone oxidoreductase subunit H (339 aa).

Helical transmembrane passes span 9–29, 50–70, 82–102, 115–135, 161–181, 187–207, 235–255, 275–295, and 311–331; these read IFPL…LILC, PNVV…KLLF, ILFI…WAVI, VGVL…IIAG, MGLV…SEII, IPWW…ISVL, MGFA…SAMT, IPGF…FLWI, and GWKV…SVLV.

It belongs to the complex I subunit 1 family. NDH-1 is composed of 14 different subunits. Subunits NuoA, H, J, K, L, M, N constitute the membrane sector of the complex.

The protein localises to the cell inner membrane. The catalysed reaction is a quinone + NADH + 5 H(+)(in) = a quinol + NAD(+) + 4 H(+)(out). In terms of biological role, NDH-1 shuttles electrons from NADH, via FMN and iron-sulfur (Fe-S) centers, to quinones in the respiratory chain. The immediate electron acceptor for the enzyme in this species is believed to be ubiquinone. Couples the redox reaction to proton translocation (for every two electrons transferred, four hydrogen ions are translocated across the cytoplasmic membrane), and thus conserves the redox energy in a proton gradient. This subunit may bind ubiquinone. In Rickettsia rickettsii (strain Iowa), this protein is NADH-quinone oxidoreductase subunit H.